The following is a 363-amino-acid chain: 3,4-dihydroxy-2-butanone 4-phosphate synthase (363 aa).

Residues 1 to 202 (MSHISPIPEI…IADLIEYRSR (202 aa)) are DHBP synthase. Residues 28-29 (RE), aspartate 33, 141-145 (RAGHT), and glutamate 165 contribute to the D-ribulose 5-phosphate site. Glutamate 29 is a binding site for Mg(2+). Mg(2+) is bound at residue histidine 144. The segment at 205–363 (SLLEDMGNAP…EVVGFEEAEK (159 aa)) is GTP cyclohydrolase II-like.

The protein in the N-terminal section; belongs to the DHBP synthase family. In the C-terminal section; belongs to the GTP cyclohydrolase II family. Mg(2+) is required as a cofactor. Mn(2+) serves as cofactor.

It carries out the reaction D-ribulose 5-phosphate = (2S)-2-hydroxy-3-oxobutyl phosphate + formate + H(+). Its pathway is cofactor biosynthesis; riboflavin biosynthesis; 2-hydroxy-3-oxobutyl phosphate from D-ribulose 5-phosphate: step 1/1. Functionally, catalyzes the conversion of D-ribulose 5-phosphate to formate and 3,4-dihydroxy-2-butanone 4-phosphate. The sequence is that of 3,4-dihydroxy-2-butanone 4-phosphate synthase (ribB) from Neisseria meningitidis serogroup B (strain ATCC BAA-335 / MC58).